The sequence spans 119 residues: HTH-type transcriptional regulator SarX (119 aa).

Residues 55 to 78 (LKTAMDELDLSRTKLLVSIRRLIE) constitute a DNA-binding region (H-T-H motif).

It belongs to the SarA family.

It is found in the cytoplasm. Involved in the regulation of virulence genes. Acts as a repressor of the agr locus and consequently targets genes regulated by the agr system such as sspA, hla and hlb. Binds directly to the agr promoter region. The polypeptide is HTH-type transcriptional regulator SarX (sarX) (Staphylococcus aureus (strain USA300)).